The chain runs to 460 residues: A-type ATP synthase subunit B (460 aa).

Belongs to the ATPase alpha/beta chains family. Has multiple subunits with at least A(3), B(3), C, D, E, F, H, I and proteolipid K(x).

It is found in the cell membrane. Component of the A-type ATP synthase that produces ATP from ADP in the presence of a proton gradient across the membrane. The B chain is a regulatory subunit. In Thermoplasma volcanium (strain ATCC 51530 / DSM 4299 / JCM 9571 / NBRC 15438 / GSS1), this protein is A-type ATP synthase subunit B.